The following is a 417-amino-acid chain: Valine--pyruvate aminotransferase (417 aa).

Lysine 249 bears the N6-(pyridoxal phosphate)lysine mark.

The protein belongs to the class-I pyridoxal-phosphate-dependent aminotransferase family. In terms of assembly, homodimer. The cofactor is pyridoxal 5'-phosphate.

It is found in the cytoplasm. It catalyses the reaction L-valine + pyruvate = 3-methyl-2-oxobutanoate + L-alanine. Functionally, involved in the biosynthesis of alanine. In Escherichia coli (strain K12), this protein is Valine--pyruvate aminotransferase (avtA).